A 274-amino-acid chain; its full sequence is NAD kinase (274 aa).

The active-site Proton acceptor is aspartate 50. Residues 50-51, 126-127, arginine 152, aspartate 154, 165-170, and alanine 189 contribute to the NAD(+) site; these read DG, NE, and TAYNKS.

This sequence belongs to the NAD kinase family. A divalent metal cation is required as a cofactor.

It localises to the cytoplasm. It catalyses the reaction NAD(+) + ATP = ADP + NADP(+) + H(+). In terms of biological role, involved in the regulation of the intracellular balance of NAD and NADP, and is a key enzyme in the biosynthesis of NADP. Catalyzes specifically the phosphorylation on 2'-hydroxyl of the adenosine moiety of NAD to yield NADP. This Streptococcus gordonii (strain Challis / ATCC 35105 / BCRC 15272 / CH1 / DL1 / V288) protein is NAD kinase.